We begin with the raw amino-acid sequence, 371 residues long: MPITQYKAAAVTSEPCWFDLEAGVQKTISFINEAGQAGSKLIAFPEVWIPGYPYWMWKVTYQQSLPLLKSYRENSLPVDSEEMRRIRRAARDNHIYVSMGFSEIDHATLYLSQVLISPTGDVLNHRRKIKPTHVEKLVYGDGDGDTFLSVVDTDLGRLGQLNCWENMNPFLKSLNIAMGEQIHIAAWPVYPGKETLKYPDPATNVAEPASDIVTPAYALETATWTLAPFQRLSVEGLKKNTPAGMEPETDPSTYNGHARIYRPDGSLVVKPDKDFDGLLYVDIDLNESHLTKALGDFASGHYMRPDLIRLLVDTRRKELVTEADPDGGVATYSTRERLGLNRPLDPPKDERHGIVGVAGQKSAEQRKAGDL.

The 280-residue stretch at 6-285 folds into the CN hydrolase domain; that stretch reads YKAAAVTSEP…DGLLYVDIDL (280 aa). Glu-46 (proton acceptor) is an active-site residue. Lys-128 is a catalytic residue. Cys-163 serves as the catalytic Nucleophile. Over residues 339-353 the composition is skewed to basic and acidic residues; it reads GLNRPLDPPKDERHG. The disordered stretch occupies residues 339–371; it reads GLNRPLDPPKDERHGIVGVAGQKSAEQRKAGDL.

This sequence belongs to the carbon-nitrogen hydrolase superfamily. Nitrilase family. Oligomer of dimers, forming left-handed helical fibers.

It carries out the reaction formamide = hydrogen cyanide + H2O. Functionally, catalyzes the hydration of cyanide to formamide. Degradation of cyanide may be important for plant pathogenic fungi in infection of cyanogenic plants. Also acts on 2-cyanopyridine, fumaronitrile and benzonitrile, albeit at a lower rate. The chain is Cyanide hydratase (nit) from Stereum hirsutum (strain FP-91666) (White-rot fungus).